We begin with the raw amino-acid sequence, 130 residues long: Small ribosomal subunit protein uS8 (130 aa).

Belongs to the universal ribosomal protein uS8 family. Part of the 30S ribosomal subunit.

In terms of biological role, one of the primary rRNA binding proteins, it binds directly to 16S rRNA central domain where it helps coordinate assembly of the platform of the 30S subunit. The sequence is that of Small ribosomal subunit protein uS8 from Pyrococcus furiosus (strain ATCC 43587 / DSM 3638 / JCM 8422 / Vc1).